The following is a 708-amino-acid chain: Capsid scaffolding protein (708 aa).

Residues His63, Ser132, and His157 each act as charge relay system in the active site. Disordered stretches follow at residues Ala269–Pro339, His455–Arg565, and Ala593–Gly619. Over residues Pro284–Ser293 the composition is skewed to low complexity. Positions Ser294–Pro311 are enriched in pro residues. Low complexity predominate over residues Ser326–Pro339. The interval Ala333–Gly352 is interaction with pAP. The span at Lys498 to Lys513 shows a compositional bias: basic residues. Short sequence motifs (nuclear localization signal) lie at residues Lys510–Thr515 and Arg537–Lys543. Residues Ala593 to Thr611 show a composition bias toward low complexity. The interval Pro688–Glu708 is interaction with major capsid protein.

Belongs to the herpesviridae capsid scaffolding protein family. As to quaternary structure, homomultimer. Interacts with major capsid protein. In terms of assembly, exists in a monomer-dimer equilibrium with the dimer being the active species. Post-translationally, capsid scaffolding protein is cleaved by assemblin after formation of the spherical procapsid. As a result, the capsid obtains its mature, icosahedral shape. Cleavages occur at two or more sites: release (R-site) and maturation (M-site).

It localises to the host cytoplasm. Its subcellular location is the host nucleus. It catalyses the reaction Cleaves -Ala-|-Ser- and -Ala-|-Ala- bonds in the scaffold protein.. Its function is as follows. Acts as a scaffold protein by binding major capsid protein in the cytoplasm, inducing the nuclear localization of both proteins. Multimerizes in the nucleus such as major capsid protein forms the icosahedral T=16 capsid. Autocatalytic cleavage releases the assembly protein, and subsequently abolishes interaction with major capsid protein. Cleavages products are evicted from the capsid before or during DNA packaging. Protease that plays an essential role in virion assembly within the nucleus. Catalyzes the cleavage of the assembly protein after formation of the spherical procapsid. By that cleavage, the capsid matures and gains its icosahedral shape. The cleavage sites seem to include -Ala-Ser-, -Ala-Ala-, as well as Ala-Thr bonds. Assemblin and cleavages products are evicted from the capsid before or during DNA packaging. Functionally, plays a major role in capsid assembly. Acts as a scaffold protein by binding major capsid protein. Multimerizes in the nucleus such as major capsid protein forms the icosahedral T=16 capsid. Cleaved by assemblin after capsid completion. The cleavages products are evicted from the capsid before or during DNA packaging. In Homo sapiens (Human), this protein is Capsid scaffolding protein (UL80).